The primary structure comprises 554 residues: Chaperonin GroEL (554 aa).

Residues 29-32 (TLGP), lysine 50, 86-90 (DGTTT), glycine 418, and aspartate 499 contribute to the ATP site. The segment at 528 to 554 (HEEDNNTNRSGGGVGGGHHGGMGGMDF) is disordered. Gly residues predominate over residues 537-554 (SGGGVGGGHHGGMGGMDF).

Belongs to the chaperonin (HSP60) family. In terms of assembly, forms a cylinder of 14 subunits composed of two heptameric rings stacked back-to-back. Interacts with the co-chaperonin GroES.

Its subcellular location is the cytoplasm. The enzyme catalyses ATP + H2O + a folded polypeptide = ADP + phosphate + an unfolded polypeptide.. Its function is as follows. Together with its co-chaperonin GroES, plays an essential role in assisting protein folding. The GroEL-GroES system forms a nano-cage that allows encapsulation of the non-native substrate proteins and provides a physical environment optimized to promote and accelerate protein folding. The protein is Chaperonin GroEL of Orientia tsutsugamushi (strain Boryong) (Rickettsia tsutsugamushi).